A 178-amino-acid chain; its full sequence is Probable chorismate pyruvate-lyase (178 aa).

Residues Arg72, Leu110, and Glu169 each coordinate substrate.

This sequence belongs to the UbiC family.

It is found in the cytoplasm. The enzyme catalyses chorismate = 4-hydroxybenzoate + pyruvate. It participates in cofactor biosynthesis; ubiquinone biosynthesis. Functionally, removes the pyruvyl group from chorismate, with concomitant aromatization of the ring, to provide 4-hydroxybenzoate (4HB) for the ubiquinone pathway. This chain is Probable chorismate pyruvate-lyase, found in Nitrosomonas eutropha (strain DSM 101675 / C91 / Nm57).